The sequence spans 320 residues: Lipoyl synthase (320 aa).

7 residues coordinate [4Fe-4S] cluster: cysteine 67, cysteine 72, cysteine 78, cysteine 93, cysteine 97, cysteine 100, and serine 307. The Radical SAM core domain maps to 79–296; sequence FNHGTATFMI…REKANEMGFE (218 aa).

It belongs to the radical SAM superfamily. Lipoyl synthase family. The cofactor is [4Fe-4S] cluster.

It localises to the cytoplasm. The enzyme catalyses [[Fe-S] cluster scaffold protein carrying a second [4Fe-4S](2+) cluster] + N(6)-octanoyl-L-lysyl-[protein] + 2 oxidized [2Fe-2S]-[ferredoxin] + 2 S-adenosyl-L-methionine + 4 H(+) = [[Fe-S] cluster scaffold protein] + N(6)-[(R)-dihydrolipoyl]-L-lysyl-[protein] + 4 Fe(3+) + 2 hydrogen sulfide + 2 5'-deoxyadenosine + 2 L-methionine + 2 reduced [2Fe-2S]-[ferredoxin]. It functions in the pathway protein modification; protein lipoylation via endogenous pathway; protein N(6)-(lipoyl)lysine from octanoyl-[acyl-carrier-protein]: step 2/2. Catalyzes the radical-mediated insertion of two sulfur atoms into the C-6 and C-8 positions of the octanoyl moiety bound to the lipoyl domains of lipoate-dependent enzymes, thereby converting the octanoylated domains into lipoylated derivatives. This Glaesserella parasuis serovar 5 (strain SH0165) (Haemophilus parasuis) protein is Lipoyl synthase.